Reading from the N-terminus, the 259-residue chain is Polycomb group RING finger protein 1 (259 aa).

A2 carries the post-translational modification N-acetylalanine. S3 is subject to Phosphoserine. K24 is covalently cross-linked (Glycyl lysine isopeptide (Lys-Gly) (interchain with G-Cter in SUMO2)). The RING-type zinc-finger motif lies at 47-86 (CCLCAGYFVDATTITECLHTFCKSCIVKYLQTSKYCPMCN). Residues 86 to 247 (NIKIHETQPL…LSRWFGKPSP (162 aa)) form a necessary for repressor activity region. K88 participates in a covalent cross-link: Glycyl lysine isopeptide (Lys-Gly) (interchain with G-Cter in SUMO2). The segment at 150–255 (LPFSSFDHSK…SPLLLQYSVK (106 aa)) is required for the interaction with the KDM2B-SKP1 heterodimeric complex. The tract at residues 167–255 (EQLSLCLERL…SPLLLQYSVK (89 aa)) is RING-finger and WD40-associated ubiquitin-like domain (RAWUL); sufficient for interaction with BCOR and BCORL1.

As to quaternary structure, interacts with BCORL1, forming heterodimers. The PCGF1-BCORL1 heterodimeric complex interacts with the KDM2B-SKP1 heterodimeric complex to form a homotetrameric polycomb repression complex 1 (PRC1.1). Component of the repressive BCOR complex containing a Polycomb group subcomplex at least composed of RYBP, RING1 and RNF2/RING2. Specifically interacts with BCOR, RING1 and RNF2/RING2. Component of a PRC1-like complex. Interacts with CBX6, CBX7 and CBX8. Interacts with DPPA4, NANOG, POU5F1 and RYBP.

It localises to the nucleus. Component of the Polycomb group (PcG) multiprotein BCOR complex, a complex required to maintain the transcriptionally repressive state of some genes, such as BCL6 and the cyclin-dependent kinase inhibitor, CDKN1A. Transcriptional repressor that may be targeted to the DNA by BCL6; this transcription repressor activity may be related to PKC signaling pathway. Represses CDKN1A expression by binding to its promoter, and this repression is dependent on the retinoic acid response element (RARE element). Promotes cell cycle progression and enhances cell proliferation as well. May have a positive role in tumor cell growth by down-regulating CDKN1A. Component of a Polycomb group (PcG) multiprotein PRC1-like complex, a complex class required to maintain the transcriptionally repressive state of many genes, including Hox genes, throughout development. PcG PRC1 complex acts via chromatin remodeling and modification of histones; it mediates monoubiquitination of histone H2A 'Lys-119', rendering chromatin heritably changed in its expressibility. Within the PRC1-like complex, regulates RNF2 ubiquitin ligase activity. Regulates the expression of DPPA4 and NANOG in the NT2 embryonic carcinoma cells. The protein is Polycomb group RING finger protein 1 (Pcgf1) of Mus musculus (Mouse).